A 375-amino-acid polypeptide reads, in one-letter code: Aldehyde reductase FrzD (375 aa).

FMN contacts are provided by alanine 61, glutamine 103, and histidine 171. Tyrosine 176 functions as the Proton donor in the catalytic mechanism. 3 residues coordinate FMN: lysine 223, glycine 294, and arginine 319.

The protein belongs to the NADH:flavin oxidoreductase/NADH oxidase family. It depends on FMN as a cofactor.

The catalysed reaction is (1S,4S)-4-[(4-hydroxyphenyl)methyl]-2,5-diazaspiro[bicyclo[3.2.1]octane-6,1'-cyclohexane]-2',5'-dien-4'-one + 2 NADPH + 2 H(+) = (1S,4S)-4-[(4-hydroxyphenyl)methyl]-2,5-diazaspiro[bicyclo[3.2.1]octane-6,1'-cyclohexan]-4'-one + 2 NADP(+). The protein operates within alkaloid biosynthesis; ergot alkaloid biosynthesis. Its function is as follows. Aldehyde reductase; part of the gene cluster that mediates the biosynthesis of the alkaloid (-)-FR901483, a potent immunosuppressant that shows efficacy in animal models and a probable inhibitor of purine nucleotide biosynthesis by targeting phosphoribosylpyrophosphate amidotransferase (PPAT). Within the pathway, FrzD reduces the dienone portion of the pathway intermediates to cyclohexanone. The biosynthesis of (-)-FR901483 starts with the condensation of two L-tyrosines to yield (S,S)-dityrosyl-piperazine. This process occurs in 3 steps with the non-canonical nonribosomal peptide synthetase FrzA catalyzing the reduction of L-tyrosine into L-tyrosinal, the spontaneous condensation of 2 L-tyrosinal units, and the subsequent reduction by the NmrA-like family domain-containing oxidoreductase FrzB. The cytochrome P450 monooxygenase FrzC then performs coupling between N10 and C1' to morph the piperazine into a 1,4-diazabicyclo[3.2.1]octane spiro-fused to a 2,5-cyclohexadienone. The dienone portion is further reduced to cyclohexanone by the flavin-dependent reductase FrzD. The methyltranserases (MTs) FrzE and FrzF are then involved in the methylation at the C10' amine and the C4 phenolic oxygen, respectively. The order of the two MTs appear to be interchangeable. Cleavage of the C9-N10' bond by the dioxygenase FrzG then leads to formation of a conjugated iminium. In addition to the oxidation of C9, an additional dehydrogenation between C7 and C8 can occur to give a likely shunt product. The next biosynthetic step is the intramolecular aldol condensation catalyzed by the newly identified aldolase FrzH to yield an aza-tricyclic product with the formation of a C9-C3' bond. The short-chain dehydrogenase/reductase FrzI then produces dephospho-(-)-FR901483 that is phosphorylated at C4'-OH into (-)-FR901483 by the phosphotransferase FrzJ. The only unassigned enzyme in the cluster is the second cytochrome P450 monooxygenase FrzL. The protein is Aldehyde reductase FrzD of Cladobotryum sp.